The sequence spans 191 residues: Cytochrome c oxidase assembly protein CtaG (191 aa).

At 1–9 the chain is on the cytoplasmic side; the sequence is MSLSPHQKT. A helical; Signal-anchor for type II membrane protein membrane pass occupies residues 10-30; sequence AGGLVLVVAVMGAASFAAVPF. The Periplasmic portion of the chain corresponds to 31 to 191; it reads YNWFCRVTGF…LAAESATDVN (161 aa).

It belongs to the COX11/CtaG family.

Its subcellular location is the cell inner membrane. Exerts its effect at some terminal stage of cytochrome c oxidase synthesis, probably by being involved in the insertion of the copper B into subunit I. This chain is Cytochrome c oxidase assembly protein CtaG, found in Cereibacter sphaeroides (strain ATCC 17029 / ATH 2.4.9) (Rhodobacter sphaeroides).